Reading from the N-terminus, the 293-residue chain is NAD kinase (293 aa).

D73 acts as the Proton acceptor in catalysis. NAD(+) is bound by residues 73–74, 147–148, R175, D177, and 188–193; these read DG, NE, and TAYSMS.

The protein belongs to the NAD kinase family. A divalent metal cation is required as a cofactor.

It localises to the cytoplasm. The enzyme catalyses NAD(+) + ATP = ADP + NADP(+) + H(+). Its function is as follows. Involved in the regulation of the intracellular balance of NAD and NADP, and is a key enzyme in the biosynthesis of NADP. Catalyzes specifically the phosphorylation on 2'-hydroxyl of the adenosine moiety of NAD to yield NADP. The sequence is that of NAD kinase from Colwellia psychrerythraea (strain 34H / ATCC BAA-681) (Vibrio psychroerythus).